A 427-amino-acid chain; its full sequence is MSTSFENKATNRGVITFTISQDKIKPALDQAFNKIKKDLNAPGFRKGHMPRPVFNQRFGEEVLYEEALNIVLPAAYEGAVAELELDVVAQPKIDVVSMEKGQEWTLTAEVVTKPEVKLGDYKDLTVEVEASKEVTDEEVDAKVERERNNLAELVVKEDAAVEGDTVVIDFVGSVDGVEFDGGKGDNFSLELGSGQFIPGFEEQLVGAKAGDTVEVNVTFPENYQAEDLAGKAAKFVTTVHEVKAKEVPELDDELAKDIDEEVETLDELKAKYRKELEASKEAAYDDALEGAAIELAVENAEIVELPEEMVHDEVHRSVNEFMASMQRQGISPDMYFQLTGTSQEDLHKQHEAEADKRVKTNLVIEAIAKAEGFEASDDEIEKEINDLAAEYSMPVEQVRSLLSADMLKHDIVMKKAVEVITSSAKAK.

The PPIase FKBP-type domain maps to 163-248; that stretch reads GDTVVIDFVG…VHEVKAKEVP (86 aa).

The protein belongs to the FKBP-type PPIase family. Tig subfamily.

It localises to the cytoplasm. The enzyme catalyses [protein]-peptidylproline (omega=180) = [protein]-peptidylproline (omega=0). Involved in protein export. Acts as a chaperone by maintaining the newly synthesized protein in an open conformation. Functions as a peptidyl-prolyl cis-trans isomerase. In Streptococcus equi subsp. zooepidemicus (strain H70), this protein is Trigger factor.